Consider the following 130-residue polypeptide: Anti-adapter protein IraD (130 aa).

The protein belongs to the GpW/Gp25 family. IraD subfamily. In terms of assembly, interacts with RssB.

It localises to the cytoplasm. In terms of biological role, inhibits RpoS proteolysis by regulating RssB activity, thereby increasing the stability of the sigma stress factor RpoS during oxidative stress. Its effect on RpoS stability is due to its interaction with RssB, which probably blocks the interaction of RssB with RpoS, and the consequent delivery of the RssB-RpoS complex to the ClpXP protein degradation pathway. This chain is Anti-adapter protein IraD, found in Escherichia coli O7:K1 (strain IAI39 / ExPEC).